The chain runs to 152 residues: Adenosine 5'-monophosphoramidase HNT1 (152 aa).

An HIT domain is found at 8–119; that stretch reads IFCKIIKGEI…IPKKDEATGL (112 aa). Residues 33–34, Asn-93, 99–101, and 106–108 each bind AMP; these read DI, HQV, and HFH. Positions 104–108 match the Histidine triad motif motif; the sequence is HVHFH. Catalysis depends on His-106, which acts as the Tele-AMP-histidine intermediate.

The protein belongs to the HINT family. As to quaternary structure, homodimer. Requires Mg(2+) as cofactor.

It catalyses the reaction adenosine 5'-phosphoramidate + H2O = AMP + NH4(+). Its function is as follows. Hydrolyzes adenosine 5'-monophosphoramidate substrates such as AMP-morpholidate, AMP-N-alanine methyl ester, AMP-alpha-acetyl lysine methyl ester and AMP-NH2. This is Adenosine 5'-monophosphoramidase HNT1 from Candida albicans (strain SC5314 / ATCC MYA-2876) (Yeast).